We begin with the raw amino-acid sequence, 395 residues long: Multidrug resistance protein MdtL (395 aa).

Helical transmembrane passes span Phe4–Val24, Ile42–Ala62, Pro69–Ser89, Leu93–Phe113, Leu131–Met151, Ser158–Leu178, Val217–Phe237, Ala247–Phe267, Thr271–His291, Val295–Met315, Val328–Ile350, and Ala355–Val377.

This sequence belongs to the major facilitator superfamily. DHA1 family. MdtL (TC 2.A.1.2.22) subfamily.

It is found in the cell inner membrane. This Salmonella schwarzengrund (strain CVM19633) protein is Multidrug resistance protein MdtL.